The primary structure comprises 231 residues: Urease accessory protein UreE (231 aa).

The disordered stretch occupies residues 185 to 231 (VASPLDEPHGSGLHIHGIHSHGEGHSHGDHDHDHSHSHGDHDHDHKH). Residues 204–231 (SHGEGHSHGDHDHDHSHSHGDHDHDHKH) show a composition bias toward basic and acidic residues.

It belongs to the UreE family.

It localises to the cytoplasm. Its function is as follows. Involved in urease metallocenter assembly. Binds nickel. Probably functions as a nickel donor during metallocenter assembly. The chain is Urease accessory protein UreE from Yersinia pseudotuberculosis serotype O:1b (strain IP 31758).